The sequence spans 1904 residues: MGSQHQSQHNSALIQAARDGEATLSVAFGGQGPSNLNCFNDLLELNKTYGSTLRPLIHTADATLSELASLPHRSGFHEDEGFETLDWLQDPKQAPSREYLALSPMSFPINTLLSLCNYCVTLRALRLDPGQFRSSLHNVVGHSQGIFAAAAIAKADSWESFLEAAEIALKISFWVGLESHTAAPPSHISAAAVQDCVEHGEGQPSSMLGITGLNRAQVEMLVERVNKSLSDDDRHVCLALANSRDKYTIAGPPHSLRAVCVQIREIRAADGVDQSRILFNKRKQEVDALFLPISAPYHSQYLKQVSNNVLDALDVDLVGSELGIPLLHTQSGQNLQDWKSKSIIKAIVCAVTTDMVEWPDVCQRLGSSYILGFGPGNIGNLIHESTEGTGVRVIQMNDRSPGSRGIGARAELFSEEMPPQALDWKQTFGPRLVLDHRGDVQIQTRMTQLLNAPPVMVAGMTPTTVTWDFVSCVMQAGYHVELAGGGYSSEARFEEALRRLAASIPIYRGITCNLLYANPQTIAWQVAVLRRLIKEGISIEGVTIGAGVPSPDVIKEYIAIGLKHISFKPGSIAAIDEVIEIAQAHPQFPIGLQWTGGRAGGHHSHEDLHLPILKTYARIRRCSNIVLIAGSGFGGGSDTYPYISGDWSKSLSYPPMPFDGILLGSRVMVAKEAHTSPQAKQLIVQTEGVGDNDWHTSFETPTGGVITITSEHGQPIHMLATRGVMLWKEFDKRIFSIKDAAKRLSYIRAHREEIITRLNKDYQKPWFGVNGDGQNVDLDRMTYREVLGRMCQLMSRGDNGWTDPSWLAMVKDFVEIAGERFGCQVDAHATKAPEVRTAFEATLGGSVDETLYPEDVALVLELLRRRGRKPPPFVPALDENFETWCKKDSLWQSEDVDSLVGKDVQRACIIQGPVAVRHSTIHDEPVQDILDNICNFHIESLLQSGETPGVARKQDLGRPNSIKKSVPGVQITTEKTTIRYQVHKTDKLPPEMDTLIEHIVGPAADCWTHHCLKDEWVFRDQARLRNPIRAAFLRQIQPGEVIEVRLSRDGNTQAIALKTALFGKSSLQTVLRIASTDGKSIKVALTPPSFLSDKPLGLQFAYQLSRKSRGSKLVEVTPNRLDAIKGFYAQLWVDSNQDVKEAGLNSEFWGEPTTLLAQDVQNYTAVVSRSTSPQLQAWNPTGSVPVDYCIVLAWTALTKPLTIPALQCDLLNLLHRSVNFKYAANARPLRLGDVTQTVSRITSLTIQPTGKLVEVSAELRRNDETVVTITTEFFIVGQFEDYETQFKSFEEPLFEVRVHSVTRQALLQSRKWLVLDDPSMDLAGLTLAFKLNTHTTFDHEGKVGALQVTGSVSRVESTGFDTRIGKVYFKKDSCNGNPVVDFLNRHGYPRVTRQPLENPGWNEGSTVLMKAPAKSNQYAMASKDTNPLHVCGVFARYAGLPDTVVHGMHTSAIVRRAVEWAVGDSDRSRFKKWQVSFEGMVRPNDRLKIQLQHTAMEHGRMIMKVQAFNDETGDKVIEAEAEVEQPRTGYVFCGQGSQEKGMGMSLYNARPEAKALWDRGDQFLREQYGFSLLSLVRENPTTLTINFGGRRGKRIRDNYLAMTKKTSLKADAKDVCIVQGLTPTSTSHTFSETKGLLFSTQFSQPAIALMEMVEHEHLFAKGVVQPSALFAGHSLGEYAALGACTTFMPFESLLTLIFYRGLKMQNALERDANGRTDYSMMAADPSRVGKAGFDERAFQCLVELVNEETGLLMEIVNHNVRSQQYVCAGHFRALWILGKVCDDLAKHPKIHLLSMQDLKDMVTTHVPAAGKLTNDIVLTRGKATIPLNGIDIPFHSTMLRGEIEHFRRYLLTKVNVPDIKPNELVGKWIPNVVGRPFSLDRSYIEHVQSVTGSEPLQKMLKAMA.

Residues 24 to 395 (LSVAFGGQGP…TEGTGVRVIQ (372 aa)) form an acetyltransferase (AT) domain region. The enoyl reductase (ER) domain stretch occupies residues 447–691 (TQLLNAPPVM…LIVQTEGVGD (245 aa)). Residues 1001 to 1491 (GPAADCWTHH…RPNDRLKIQL (491 aa)) form a dehydratase (DH) domain region. The 114-residue stretch at 1399 to 1512 (PGWNEGSTVL…MKVQAFNDET (114 aa)) folds into the MaoC-like domain. The tract at residues 1530–1893 (YVFCGQGSQE…IEHVQSVTGS (364 aa)) is malonyl/palmitoyl transferase (MT/PT) domain.

It belongs to the fungal fatty acid synthetase subunit beta family. [Alpha(6)beta(6)] hexamers of two multifunctional subunits (alpha and beta).

The catalysed reaction is acetyl-CoA + n malonyl-CoA + 2n NADPH + 4n H(+) = a long-chain-acyl-CoA + n CoA + n CO2 + 2n NADP(+).. It catalyses the reaction holo-[ACP] + acetyl-CoA = acetyl-[ACP] + CoA. It carries out the reaction holo-[ACP] + malonyl-CoA = malonyl-[ACP] + CoA. The enzyme catalyses a (3R)-hydroxyacyl-[ACP] = a (2E)-enoyl-[ACP] + H2O. The catalysed reaction is a 2,3-saturated acyl-[ACP] + NAD(+) = a (2E)-enoyl-[ACP] + NADH + H(+). It catalyses the reaction (9Z)-octadecenoyl-[ACP] + H2O = (9Z)-octadecenoate + holo-[ACP] + H(+). The protein operates within mycotoxin biosynthesis. Fatty acid synthase beta subunit; part of the fragmented gene cluster that mediates the biosynthesis of dothistromin (DOTH), a polyketide toxin very similar in structure to the aflatoxin precursor, versicolorin B. The first step of the pathway is the conversion of acetate to norsolorinic acid (NOR) and requires the fatty acid synthase subunits hexA and hexB, as well as the polyketide synthase pksA. PksA combines a hexanoyl starter unit and 7 malonyl-CoA extender units to synthesize the precursor NOR. The hexanoyl starter unit is provided to the acyl-carrier protein (ACP) domain by the fungal fatty acid synthase hexA/hexB. The second step is the conversion of NOR to averantin (AVN) and requires the norsolorinic acid ketoreductase nor1, which catalyzes the dehydration of norsolorinic acid to form (1'S)-averantin. The cytochrome P450 monooxygenase avnA then catalyzes the hydroxylation of AVN to 5'hydroxyaverantin (HAVN). The next step is performed by adhA that transforms HAVN to averufin (AVF). Averufin might then be converted to hydroxyversicolorone by cypX and avfA. Hydroxyversicolorone is further converted versiconal hemiacetal acetate (VHA) by moxY. VHA is then the substrate for the versiconal hemiacetal acetate esterase est1 to yield versiconal (VAL). Versicolorin B synthase vbsA then converts VAL to versicolorin B (VERB) by closing the bisfuran ring. Then, the activity of the versicolorin B desaturase verB leads to versicolorin A (VERA). DotB, a predicted chloroperoxidase, may perform epoxidation of the A-ring of VERA. Alternatively, a cytochrome P450, such as cypX or avnA could catalyze this step. It is also possible that another, uncharacterized, cytochrome P450 enzyme is responsible for this step. Opening of the epoxide could potentially be achieved by the epoxide hydrolase epoA. However, epoA seems not to be required for DOTH biosynthesis, but other epoxide hydrolases may have the ability to complement this hydrolysis. Alternatively, opening of the epoxide ring could be achieved non-enzymatically. The next step is the deoxygenation of ring A to yield the 5,8-dihydroxyanthraquinone which is most likely catalyzed by the NADPH dehydrogenase encoded by ver1. The last stages of DOTH biosynthesis are proposed to involve hydroxylation of the bisfuran. OrdB and norB might have oxidative roles here. An alternative possibility is that cytochrome P450 monoogenases such as avnA and cypX might perform these steps in addition to previously proposed steps. This chain is Fatty acid synthase beta subunit hexB, found in Dothistroma septosporum (strain NZE10 / CBS 128990) (Red band needle blight fungus).